A 500-amino-acid chain; its full sequence is Type-2 serine--tRNA ligase (500 aa).

Position 305 (Ala-305) interacts with L-serine. Residue Cys-307 coordinates Zn(2+). Arg-337 provides a ligand contact to L-serine. Residues 337 to 339 (RYE) and 348 to 349 (RV) each bind ATP. L-serine-binding positions include 354 to 356 (RIE) and Gln-401. Position 356 (Glu-356) interacts with Zn(2+). Glu-430 provides a ligand contact to ATP. Residue Asn-433 participates in L-serine binding. Cys-459 contacts Zn(2+). Residue Arg-466 coordinates ATP.

It belongs to the class-II aminoacyl-tRNA synthetase family. Type-2 seryl-tRNA synthetase subfamily. In terms of assembly, homodimer. It depends on Zn(2+) as a cofactor.

The protein resides in the cytoplasm. It catalyses the reaction tRNA(Ser) + L-serine + ATP = L-seryl-tRNA(Ser) + AMP + diphosphate + H(+). It carries out the reaction tRNA(Sec) + L-serine + ATP = L-seryl-tRNA(Sec) + AMP + diphosphate + H(+). It participates in aminoacyl-tRNA biosynthesis; selenocysteinyl-tRNA(Sec) biosynthesis; L-seryl-tRNA(Sec) from L-serine and tRNA(Sec): step 1/1. In terms of biological role, catalyzes the attachment of serine to tRNA(Ser). Is also able to aminoacylate tRNA(Sec) with serine, to form the misacylated tRNA L-seryl-tRNA(Sec), which will be further converted into selenocysteinyl-tRNA(Sec). The chain is Type-2 serine--tRNA ligase from Methanothrix thermoacetophila (strain DSM 6194 / JCM 14653 / NBRC 101360 / PT) (Methanosaeta thermophila).